Reading from the N-terminus, the 251-residue chain is uncharacterized protein (251 aa).

A divalent metal cation is bound by residues His-6, His-8, Glu-90, His-130, His-154, and Asp-202.

The protein belongs to the metallo-dependent hydrolases superfamily. TatD-type hydrolase family. A divalent metal cation serves as cofactor.

This is an uncharacterized protein from Haemophilus influenzae (strain ATCC 51907 / DSM 11121 / KW20 / Rd).